A 173-amino-acid chain; its full sequence is MSWKALTILLVFSSTQATASCRWSRAALFPAAHRPKRSLSLPLNPVLQTSLEEVELLYELLLAEIEISPDLEISIKDEELASLRKALSFHSICNNIIPKRIPDIRRLSANLANHPGILKKEDFERITLTLAYTAYRTALSEGHQKDIWAQSLISLFQALRHDLMRSSSPAVSS.

The N-terminal stretch at 1-17 (MSWKALTILLVFSSTQA) is a signal peptide.

Belongs to the FAM180 family.

The protein resides in the secreted. This Mus musculus (Mouse) protein is Protein FAM180A (Fam180a).